The chain runs to 301 residues: NAD kinase (301 aa).

The Proton acceptor role is filled by aspartate 84. Residues 84-85 (DG), arginine 89, 158-159 (NE), lysine 169, asparagine 188, 199-204 (TAYSFS), and glutamine 258 contribute to the NAD(+) site.

This sequence belongs to the NAD kinase family. It depends on a divalent metal cation as a cofactor.

Its subcellular location is the cytoplasm. The catalysed reaction is NAD(+) + ATP = ADP + NADP(+) + H(+). Involved in the regulation of the intracellular balance of NAD and NADP, and is a key enzyme in the biosynthesis of NADP. Catalyzes specifically the phosphorylation on 2'-hydroxyl of the adenosine moiety of NAD to yield NADP. The protein is NAD kinase of Tropheryma whipplei (strain Twist) (Whipple's bacillus).